The following is a 156-amino-acid chain: Arginine repressor (156 aa).

It belongs to the ArgR family.

The protein resides in the cytoplasm. It participates in amino-acid biosynthesis; L-arginine biosynthesis [regulation]. In terms of biological role, regulates arginine biosynthesis genes. In Tolumonas auensis (strain DSM 9187 / NBRC 110442 / TA 4), this protein is Arginine repressor.